The following is a 274-amino-acid chain: 2,3,4,5-tetrahydropyridine-2,6-dicarboxylate N-succinyltransferase (274 aa).

Residues R106 and D143 each coordinate substrate.

Belongs to the transferase hexapeptide repeat family. As to quaternary structure, homotrimer.

It localises to the cytoplasm. The enzyme catalyses (S)-2,3,4,5-tetrahydrodipicolinate + succinyl-CoA + H2O = (S)-2-succinylamino-6-oxoheptanedioate + CoA. It functions in the pathway amino-acid biosynthesis; L-lysine biosynthesis via DAP pathway; LL-2,6-diaminopimelate from (S)-tetrahydrodipicolinate (succinylase route): step 1/3. The protein is 2,3,4,5-tetrahydropyridine-2,6-dicarboxylate N-succinyltransferase of Rickettsia typhi (strain ATCC VR-144 / Wilmington).